Reading from the N-terminus, the 382-residue chain is uncharacterized protein (382 aa).

The next 12 membrane-spanning stretches (helical) occupy residues Gly-14–Ala-34, Met-45–Ile-65, Tyr-75–Trp-95, Phe-102–Ser-122, Leu-131–Ser-151, Leu-157–Phe-177, Leu-204–Pro-224, Gly-231–Gly-251, Val-270–Pro-290, Ala-291–Cys-311, Ala-325–Met-345, and Ser-349–Leu-369.

Belongs to the major facilitator superfamily. YcaD (TC 2.A.1.26) family.

The protein localises to the cell inner membrane. This is an uncharacterized protein from Salmonella paratyphi A (strain ATCC 9150 / SARB42).